Here is a 765-residue protein sequence, read N- to C-terminus: MAFPVISTYRVQMRGRSNGFGFTFADAENLLDYLDDLGVSHLYLSPILTAVGGSTHGYDVTDPTTVSPELGGSDGLARLSAAARSRGMGLIVDIVPSHVGVGKPEQNAWWWDVLKFGRSSAYAEFFDIDWELGDGRIILPLLGSDSDVANLRVDGDLLRLGDLALPVAPGSGDGTGPAVHDRQHYRLVGWRHGLCGYRRFFSITSLAGLRQEDRAVFDASHAEVARWFTEGLVDGVRVDHLDGLSDPSGYLAQLRELLGPNAWIVVEKILAVDEALEPTLPVDGSTGYDVLREIGGVLVDPQGESPLTALVESAGVDYQEMPAMLADLKVHAAVHTLASELRRLRRCIAAAAGADHPLLPAAVAALLRHIGRYRCDYPGQAAVLPCALAETHSTTPQLAPGLQLIAAAVARGGEPAVRLQQLCGAVSAKAVEDCMFYRDARLVSLNEVGGEPRRFGVGAAEFHHRAATRARLWPRSMTTLSTHDTKRGEDVRARIGVLSQVPWLWAKFIGHAQAIAPAPDAVTGQFLWQNVFGVWPVSGEVSAALRGRLHTYAEKAIREAAWHTSWHNPNRAFEDDVHGWLDLVLDGPLASELTGLVAHLNSHAESDALAAKLLALTVPGVPDVYQGSELWDDSLVDPDNRRPVDYGTRRVALKALQHPKIRVLAAALRLRRTHPESFLGGAYHPVFAAGPAADHVVAFRRGDDILVAVTRWTVRLQQTGWDHTVLPLPDGSWTDALTGFTASGHTPAVELFADLPVVLLVRDNA.

Belongs to the glycosyl hydrolase 13 family. As to quaternary structure, monomer.

The enzyme catalyses 4-[(1-&gt;4)-alpha-D-glucosyl](n-1)-D-glucose = 1-[(1-&gt;4)-alpha-D-glucosyl](n-1)-alpha-D-glucose. Its function is as follows. Catalyzes the conversion of maltooligosaccharide into the non-reducing saccharide, maltooligosyl trehalose (alpha-maltooligosyl alpha-D-glucoside) by intramolecular transglycosylation. The polypeptide is Putative maltooligosyl trehalose synthase (treY) (Mycobacterium tuberculosis (strain CDC 1551 / Oshkosh)).